The chain runs to 147 residues: Cytochrome c-type biogenesis protein CcmE (147 aa).

Topologically, residues 1–7 (MTRKQKR) are cytoplasmic. A helical; Signal-anchor for type II membrane protein transmembrane segment spans residues 8–28 (LSVIVGGLAFLGAATGLTFYA). At 29-147 (LGQKASYFYM…KGVWQESKSE (119 aa)) the chain is on the periplasmic side. Heme is bound by residues His122 and Tyr126.

It belongs to the CcmE/CycJ family.

It localises to the cell inner membrane. Functionally, heme chaperone required for the biogenesis of c-type cytochromes. Transiently binds heme delivered by CcmC and transfers the heme to apo-cytochromes in a process facilitated by CcmF and CcmH. This is Cytochrome c-type biogenesis protein CcmE from Mesorhizobium japonicum (strain LMG 29417 / CECT 9101 / MAFF 303099) (Mesorhizobium loti (strain MAFF 303099)).